Reading from the N-terminus, the 464-residue chain is RYamide receptor (464 aa).

Residues 1 to 105 (MEHHNSHLLP…EDMWSSAYFK (105 aa)) are Extracellular-facing. N-linked (GlcNAc...) asparagine glycosylation is found at Asn-49, Asn-79, and Asn-85. A helical membrane pass occupies residues 106 to 126 (IIVYMLYIPIFIFALIGNGTV). Residues 127-148 (CYIVYSTPRMRTVTNYFIASLA) lie on the Cytoplasmic side of the membrane. A helical membrane pass occupies residues 149-169 (IGDILMSFFCVPSSFISLFIL). Residues 170–189 (NYWPFGLALCHFVNYSQAVS) lie on the Extracellular side of the membrane. Asn-183 carries N-linked (GlcNAc...) asparagine glycosylation. The helical transmembrane segment at 190-210 (VLVSAYTLVAISIDRYIAIMW) threads the bilayer. The Cytoplasmic segment spans residues 211–221 (PLKPRITKRYA). A helical transmembrane segment spans residues 222-242 (TFIIAGVWFIALATALPIPIV). The Extracellular segment spans residues 243–274 (SGLDIPMSPWHTKCEKYICREMWPSRTQEYYY). A helical membrane pass occupies residues 275–295 (TLSLFALQFVVPLGVLIFTYA). At 296 to 329 (RITIRVWAKRPPGEAETNRDQRMARSKRKMVKMM) the chain is on the cytoplasmic side. The helical transmembrane segment at 330 to 350 (LTVVIVFTCCWLPFNILQLLL) threads the bilayer. Over 351-363 (NDEEFAHWDPLPY) the chain is Extracellular. Residues 364 to 384 (VWFAFHWLAMSHCCYNPIIYC) form a helical membrane-spanning segment. Topologically, residues 385-464 (YMNARFRSGF…LSCGETSPLR (80 aa)) are cytoplasmic.

This sequence belongs to the G-protein coupled receptor 1 family.

The protein localises to the cell membrane. Receptor for the neuropeptides RYamide-1 and RYamide-2. The activity of this receptor is mediated by G proteins which activate a phosphatidyl-inositol-calcium second messenger system. RYamide signaling may suppress feeding behavior. This chain is RYamide receptor, found in Drosophila melanogaster (Fruit fly).